We begin with the raw amino-acid sequence, 397 residues long: 8-amino-7-oxononanoate synthase (397 aa).

R24 serves as a coordination point for substrate. 110 to 111 (GY) lines the pyridoxal 5'-phosphate pocket. A substrate-binding site is contributed by H135. S183, H211, and T240 together coordinate pyridoxal 5'-phosphate. K243 bears the N6-(pyridoxal phosphate)lysine mark. T357 contributes to the substrate binding site.

This sequence belongs to the class-II pyridoxal-phosphate-dependent aminotransferase family. BioF subfamily. Homodimer. It depends on pyridoxal 5'-phosphate as a cofactor.

It catalyses the reaction 6-carboxyhexanoyl-[ACP] + L-alanine + H(+) = (8S)-8-amino-7-oxononanoate + holo-[ACP] + CO2. It participates in cofactor biosynthesis; biotin biosynthesis. Functionally, catalyzes the decarboxylative condensation of pimeloyl-[acyl-carrier protein] and L-alanine to produce 8-amino-7-oxononanoate (AON), [acyl-carrier protein], and carbon dioxide. This is 8-amino-7-oxononanoate synthase from Hydrogenovibrio crunogenus (strain DSM 25203 / XCL-2) (Thiomicrospira crunogena).